We begin with the raw amino-acid sequence, 298 residues long: N-acetylmuramic acid 6-phosphate etherase (298 aa).

Residues 55 to 218 (IHTQVSGGGR…STGLMIKSGK (164 aa)) form the SIS domain. The Proton donor role is filled by glutamate 83. Residue glutamate 114 is part of the active site.

It belongs to the GCKR-like family. MurNAc-6-P etherase subfamily. In terms of assembly, homodimer.

The catalysed reaction is N-acetyl-D-muramate 6-phosphate + H2O = N-acetyl-D-glucosamine 6-phosphate + (R)-lactate. It functions in the pathway amino-sugar metabolism; 1,6-anhydro-N-acetylmuramate degradation. It participates in amino-sugar metabolism; N-acetylmuramate degradation. The protein operates within cell wall biogenesis; peptidoglycan recycling. Its function is as follows. Specifically catalyzes the cleavage of the D-lactyl ether substituent of MurNAc 6-phosphate, producing GlcNAc 6-phosphate and D-lactate. Together with AnmK, is also required for the utilization of anhydro-N-acetylmuramic acid (anhMurNAc) either imported from the medium or derived from its own cell wall murein, and thus plays a role in cell wall recycling. The chain is N-acetylmuramic acid 6-phosphate etherase from Escherichia coli O1:K1 / APEC.